A 632-amino-acid polypeptide reads, in one-letter code: Golgin subfamily A member 8M (632 aa).

The disordered stretch occupies residues 1-77 (MAEETQHNKL…SSATLKDLES (77 aa)). Positions 38–50 (TNGSIPQTATSGG) are enriched in polar residues. Coiled coils occupy residues 86-154 (LDSR…HMKR) and 209-421 (KLEQ…SLMA). Positions 352 to 362 (KQEERIQEQHK) are enriched in basic and acidic residues. 3 disordered regions span residues 352-384 (KQEERIQEQHKSLQQLAKPQSVFEEPNNENKST), 422-456 (LPGEGHGGEHLDSEGEEAPQPMPSVPEDPESREAM), and 505-524 (DAALGGGHHQAGAQGGDEGE). Residues 508–520 (LGGGHHQAGAQGG) show a composition bias toward gly residues.

The protein belongs to the GOLGA8 family.

This chain is Golgin subfamily A member 8M, found in Homo sapiens (Human).